The chain runs to 111 residues: Large ribosomal subunit protein uL23 (111 aa).

It belongs to the universal ribosomal protein uL23 family. Part of the 50S ribosomal subunit. Contacts protein L29, and trigger factor when it is bound to the ribosome.

Its function is as follows. One of the early assembly proteins it binds 23S rRNA. One of the proteins that surrounds the polypeptide exit tunnel on the outside of the ribosome. Forms the main docking site for trigger factor binding to the ribosome. This Chlamydia trachomatis serovar L2 (strain ATCC VR-902B / DSM 19102 / 434/Bu) protein is Large ribosomal subunit protein uL23.